The following is a 140-amino-acid chain: Low calcium response locus protein T (140 aa).

In Yersinia pestis, this protein is Low calcium response locus protein T (lcrT).